Here is a 230-residue protein sequence, read N- to C-terminus: Cytidylate kinase (230 aa).

12-20 (GPSGAGKGT) is a binding site for ATP.

Belongs to the cytidylate kinase family. Type 1 subfamily.

Its subcellular location is the cytoplasm. It catalyses the reaction CMP + ATP = CDP + ADP. The enzyme catalyses dCMP + ATP = dCDP + ADP. This chain is Cytidylate kinase, found in Shewanella piezotolerans (strain WP3 / JCM 13877).